We begin with the raw amino-acid sequence, 485 residues long: Cobyric acid synthase (485 aa).

In terms of domain architecture, GATase cobBQ-type spans 250–448; it reads TQTVAVIAYP…LHGMFEDPRV (199 aa). C334 acts as the Nucleophile in catalysis. H440 is an active-site residue.

It belongs to the CobB/CobQ family. CobQ subfamily.

The protein operates within cofactor biosynthesis; adenosylcobalamin biosynthesis. Its function is as follows. Catalyzes amidations at positions B, D, E, and G on adenosylcobyrinic A,C-diamide. NH(2) groups are provided by glutamine, and one molecule of ATP is hydrogenolyzed for each amidation. In Polaromonas naphthalenivorans (strain CJ2), this protein is Cobyric acid synthase.